The chain runs to 366 residues: tRNA/tmRNA (uracil-C(5))-methyltransferase (366 aa).

5 residues coordinate S-adenosyl-L-methionine: Q190, Y218, N223, E239, and D299. The active-site Nucleophile is the C324. E358 acts as the Proton acceptor in catalysis.

The protein belongs to the class I-like SAM-binding methyltransferase superfamily. RNA M5U methyltransferase family. TrmA subfamily.

The enzyme catalyses uridine(54) in tRNA + S-adenosyl-L-methionine = 5-methyluridine(54) in tRNA + S-adenosyl-L-homocysteine + H(+). The catalysed reaction is uridine(341) in tmRNA + S-adenosyl-L-methionine = 5-methyluridine(341) in tmRNA + S-adenosyl-L-homocysteine + H(+). Functionally, dual-specificity methyltransferase that catalyzes the formation of 5-methyluridine at position 54 (m5U54) in all tRNAs, and that of position 341 (m5U341) in tmRNA (transfer-mRNA). The chain is tRNA/tmRNA (uracil-C(5))-methyltransferase from Klebsiella pneumoniae (strain 342).